Here is a 472-residue protein sequence, read N- to C-terminus: Poly(A) polymerase catalytic subunit (472 aa).

Residues aspartate 191 and aspartate 193 contribute to the active site.

Belongs to the poxviridae poly(A) polymerase catalytic subunit family. As to quaternary structure, heterodimer of a large (catalytic) subunit and a small (regulatory) subunit.

It carries out the reaction RNA(n) + ATP = RNA(n)-3'-adenine ribonucleotide + diphosphate. Functionally, polymerase that creates the 3'-poly(A) tail of mRNA's. This is Poly(A) polymerase catalytic subunit (PAPL) from Capra hircus (Goat).